The sequence spans 489 residues: Pup--protein ligase (489 aa).

Mg(2+) is bound at residue E25. R69 contacts ATP. Y71 is a Mg(2+) binding site. Residue D73 is the Proton acceptor of the active site. E79 serves as a coordination point for Mg(2+). ATP is bound by residues T82 and W447.

It belongs to the Pup ligase/Pup deamidase family. Pup-conjugating enzyme subfamily.

It catalyses the reaction ATP + [prokaryotic ubiquitin-like protein]-L-glutamate + [protein]-L-lysine = ADP + phosphate + N(6)-([prokaryotic ubiquitin-like protein]-gamma-L-glutamyl)-[protein]-L-lysine.. It participates in protein degradation; proteasomal Pup-dependent pathway. The protein operates within protein modification; protein pupylation. Functionally, catalyzes the covalent attachment of the prokaryotic ubiquitin-like protein modifier Pup to the proteasomal substrate proteins, thereby targeting them for proteasomal degradation. This tagging system is termed pupylation. The ligation reaction involves the side-chain carboxylate of the C-terminal glutamate of Pup and the side-chain amino group of a substrate lysine. The polypeptide is Pup--protein ligase (Corynebacterium efficiens (strain DSM 44549 / YS-314 / AJ 12310 / JCM 11189 / NBRC 100395)).